Here is a 196-residue protein sequence, read N- to C-terminus: Peptidyl-tRNA hydrolase (196 aa).

TRNA is bound at residue Y18. H23 serves as the catalytic Proton acceptor. F69, N71, and N117 together coordinate tRNA.

The protein belongs to the PTH family. Monomer.

It is found in the cytoplasm. It carries out the reaction an N-acyl-L-alpha-aminoacyl-tRNA + H2O = an N-acyl-L-amino acid + a tRNA + H(+). In terms of biological role, hydrolyzes ribosome-free peptidyl-tRNAs (with 1 or more amino acids incorporated), which drop off the ribosome during protein synthesis, or as a result of ribosome stalling. Catalyzes the release of premature peptidyl moieties from peptidyl-tRNA molecules trapped in stalled 50S ribosomal subunits, and thus maintains levels of free tRNAs and 50S ribosomes. This is Peptidyl-tRNA hydrolase from Vibrio campbellii (strain ATCC BAA-1116).